The sequence spans 162 residues: uncharacterized protein (162 aa).

Positions 1–21 (MEGIMKKFFALMTLIAGISFS) are cleaved as a signal peptide. Residues 32 to 118 (VIRESKFIAK…KKAELEKMVF (87 aa)) adopt a coiled-coil conformation.

This sequence belongs to the Skp family.

This is an uncharacterized protein from Aquifex aeolicus (strain VF5).